Consider the following 441-residue polypeptide: tRNA (adenine(37)-N6)-methyltransferase (441 aa).

Positions 30-168 (TEPVGYLESC…YIAEYDSPQN (139 aa)) constitute a TsaA-like domain. Residues 47 to 49 (PRQ), 90 to 91 (HK), Arg-117, Leu-127, and 148 to 151 (IHGT) each bind S-adenosyl-L-methionine. A compositionally biased stretch (polar residues) spans 179–192 (QNNQHTPNTVSQSD). 2 disordered regions span residues 179–231 (QNNQ…EENY) and 264–284 (SSVAEEQIGPYCPEKSFSEKG).

The protein belongs to the tRNA methyltransferase O family.

It catalyses the reaction N(6)-L-threonylcarbamoyladenosine(37) in tRNA + S-adenosyl-L-methionine = N(6)-methyl,N(6)-L-threonylcarbamoyladenosine(37) in tRNA + S-adenosyl-L-homocysteine + H(+). S-adenosyl-L-methionine-dependent methyltransferase responsible for the addition of the methyl group in the formation of N6-methyl-N6-threonylcarbamoyladenosine at position 37 (m(6)t(6)A37) of the tRNA anticodon loop of tRNA(Ser)(GCU). The methyl group of m(6)t(6)A37 may improve the efficiency of the tRNA decoding ability. The chain is tRNA (adenine(37)-N6)-methyltransferase from Homo sapiens (Human).